The primary structure comprises 188 residues: Methylated-DNA--protein-cysteine methyltransferase (188 aa).

The DNA site is built by Tyr-120, Gly-121, and Arg-134. Residue Cys-151 is the Nucleophile; methyl group acceptor of the active site. Ser-157 is a DNA binding site.

This sequence belongs to the MGMT family.

The protein localises to the nucleus. The catalysed reaction is a 6-O-methyl-2'-deoxyguanosine in DNA + L-cysteinyl-[protein] = S-methyl-L-cysteinyl-[protein] + a 2'-deoxyguanosine in DNA. It catalyses the reaction a 4-O-methyl-thymidine in DNA + L-cysteinyl-[protein] = a thymidine in DNA + S-methyl-L-cysteinyl-[protein]. In terms of biological role, involved in the cellular defense against the biological effects of O6-methylguanine (O6-MeG) and O4-methylthymine (O4-MeT) in DNA. Repairs the methylated nucleobase in DNA by stoichiometrically transferring the methyl group to a cysteine residue in the enzyme. This is a suicide reaction: the enzyme is irreversibly inactivated. Prefers double-stranded DNA over single-stranded DNA as substrate. The sequence is that of Methylated-DNA--protein-cysteine methyltransferase (MGT1) from Saccharomyces cerevisiae (strain YJM789) (Baker's yeast).